Reading from the N-terminus, the 207-residue chain is Methylated-DNA--protein-cysteine methyltransferase (207 aa).

Position 5 (C5) interacts with Zn(2+). At S14 the chain carries Phosphoserine. C24, H29, and H85 together coordinate Zn(2+). DNA contacts are provided by T95, Y114, Q115, N123, and R128. Residue C145 is the Nucleophile; methyl group acceptor of the active site. Residue S151 participates in DNA binding. The residue at position 201 (S201) is a Phosphoserine.

This sequence belongs to the MGMT family. The cofactor is Zn(2+).

It localises to the nucleus. The catalysed reaction is a 6-O-methyl-2'-deoxyguanosine in DNA + L-cysteinyl-[protein] = S-methyl-L-cysteinyl-[protein] + a 2'-deoxyguanosine in DNA. It catalyses the reaction a 4-O-methyl-thymidine in DNA + L-cysteinyl-[protein] = a thymidine in DNA + S-methyl-L-cysteinyl-[protein]. Its function is as follows. Involved in the cellular defense against the biological effects of O6-methylguanine (O6-MeG) and O4-methylthymine (O4-MeT) in DNA. Repairs the methylated nucleobase in DNA by stoichiometrically transferring the methyl group to a cysteine residue in the enzyme. This is a suicide reaction: the enzyme is irreversibly inactivated. This Homo sapiens (Human) protein is Methylated-DNA--protein-cysteine methyltransferase (MGMT).